Reading from the N-terminus, the 381-residue chain is Cytochrome b (381 aa).

Transmembrane regions (helical) follow at residues 33 to 53 (FGSLLGICLVIQILTGLFLAM), 77 to 98 (WLIRNLHANGASMFFMCLFLHV), 113 to 133 (WNIGVILLLTVMATAFVGYVL), and 178 to 198 (FFAFHFILPFIIMALVIVHLL). Heme b contacts are provided by histidine 83 and histidine 97. Residues histidine 182 and histidine 196 each coordinate heme b. Residue histidine 201 participates in a ubiquinone binding. A run of 4 helical transmembrane segments spans residues 226 to 246 (IKDALGLMFLLLVLLTLALFS), 288 to 308 (LGGVLALLASILILLIIPLLH), 320 to 340 (VSQTLFWILTANLITLTWIGG), and 347 to 367 (FIIIGQSASILLSMLILVLMP).

It belongs to the cytochrome b family. As to quaternary structure, the cytochrome bc1 complex contains 11 subunits: 3 respiratory subunits (MT-CYB, CYC1 and UQCRFS1), 2 core proteins (UQCRC1 and UQCRC2) and 6 low-molecular weight proteins (UQCRH/QCR6, UQCRB/QCR7, UQCRQ/QCR8, UQCR10/QCR9, UQCR11/QCR10 and a cleavage product of UQCRFS1). This cytochrome bc1 complex then forms a dimer. Requires heme b as cofactor.

It is found in the mitochondrion inner membrane. In terms of biological role, component of the ubiquinol-cytochrome c reductase complex (complex III or cytochrome b-c1 complex) that is part of the mitochondrial respiratory chain. The b-c1 complex mediates electron transfer from ubiquinol to cytochrome c. Contributes to the generation of a proton gradient across the mitochondrial membrane that is then used for ATP synthesis. This is Cytochrome b (MT-CYB) from Ningaui yvonnae (Southern ningaui).